The chain runs to 333 residues: L-lactate dehydrogenase A chain (333 aa).

At Ala2 the chain carries N-acetylalanine. NAD(+)-binding positions include 30 to 58 (GAVG…MEDK) and Arg100. 3 residues coordinate substrate: Arg107, Asn139, and Arg170. Asn139 is a binding site for NAD(+). His194 (proton acceptor) is an active-site residue. Position 249 (Thr249) interacts with substrate.

The protein belongs to the LDH/MDH superfamily. LDH family. As to quaternary structure, homotetramer.

It localises to the cytoplasm. The enzyme catalyses (S)-lactate + NAD(+) = pyruvate + NADH + H(+). It participates in fermentation; pyruvate fermentation to lactate; (S)-lactate from pyruvate: step 1/1. Interconverts simultaneously and stereospecifically pyruvate and lactate with concomitant interconversion of NADH and NAD(+). The chain is L-lactate dehydrogenase A chain (ldha) from Squalus acanthias (Spiny dogfish).